The sequence spans 598 residues: UvrABC system protein C (598 aa).

The GIY-YIG domain maps to 14-91; sequence DQPGCYLMKD…IHKNNPKYNI (78 aa). Positions 196-231 constitute a UVR domain; it reads TEIQDRLQEKMAYAAAHMEFEKAAEFRDQIKAIETV.

It belongs to the UvrC family. As to quaternary structure, interacts with UvrB in an incision complex.

It localises to the cytoplasm. In terms of biological role, the UvrABC repair system catalyzes the recognition and processing of DNA lesions. UvrC both incises the 5' and 3' sides of the lesion. The N-terminal half is responsible for the 3' incision and the C-terminal half is responsible for the 5' incision. The chain is UvrABC system protein C from Enterococcus faecalis (strain ATCC 700802 / V583).